A 334-amino-acid chain; its full sequence is MDLTGAHMLKIHRPSIDHPFGVDLWHLFEQLSIKTIGWNPSEFEYIPGKTPMSQWSSVIVSITAYYVIILSGRAIMTNRKPLKQRRLFQLHNFILTIISGALLALLVEEVFRNYMRNGLFYCVCDSRHFTQRLVTLYYLNYLTKYLELMDTVFLFLKKKPLAFLHCYHHGITALLCFTQLLGRTSVQWGVIGLNLYVHVIMYSYYFLAACGRRVWWKQWVTRVQIIQFVLDLILCYFGTYSHIAFRYFPWLPHVGDCSGSLFAAFFGCGVLSSYLFLFIGFYINTYIKRGAKKNQRKAAGKADNTSVAAAAGSEALAATTATNASPFSARSRKL.

Residues 1-51 lie on the Lumenal side of the membrane; the sequence is MDLTGAHMLKIHRPSIDHPFGVDLWHLFEQLSIKTIGWNPSEFEYIPGKTP. Residues 52-72 traverse the membrane as a helical segment; that stretch reads MSQWSSVIVSITAYYVIILSG. Over 73–86 the chain is Cytoplasmic; that stretch reads RAIMTNRKPLKQRR. The chain crosses the membrane as a helical span at residues 87–107; that stretch reads LFQLHNFILTIISGALLALLV. Residues 108 to 135 lie on the Lumenal side of the membrane; the sequence is EEVFRNYMRNGLFYCVCDSRHFTQRLVT. The chain crosses the membrane as a helical span at residues 136–156; the sequence is LYYLNYLTKYLELMDTVFLFL. At 157–160 the chain is on the cytoplasmic side; it reads KKKP. A helical transmembrane segment spans residues 161–181; the sequence is LAFLHCYHHGITALLCFTQLL. Topologically, residues 182–187 are lumenal; the sequence is GRTSVQ. Residues 188–208 traverse the membrane as a helical segment; sequence WGVIGLNLYVHVIMYSYYFLA. The Cytoplasmic portion of the chain corresponds to 209–224; the sequence is ACGRRVWWKQWVTRVQ. The helical transmembrane segment at 225–245 threads the bilayer; that stretch reads IIQFVLDLILCYFGTYSHIAF. Residues 246-260 lie on the Lumenal side of the membrane; sequence RYFPWLPHVGDCSGS. Residues 261–281 form a helical membrane-spanning segment; sequence LFAAFFGCGVLSSYLFLFIGF. Topologically, residues 282–334 are cytoplasmic; that stretch reads YINTYIKRGAKKNQRKAAGKADNTSVAAAAGSEALAATTATNASPFSARSRKL. Ser325 carries the post-translational modification Phosphoserine.

This sequence belongs to the ELO family.

Its subcellular location is the endoplasmic reticulum membrane. The enzyme catalyses a very-long-chain acyl-CoA + malonyl-CoA + H(+) = a very-long-chain 3-oxoacyl-CoA + CO2 + CoA. Functionally, may be involved in the synthesis of very long chain fatty acids. This is Putative fatty acid elongase 1 from Schizosaccharomyces pombe (strain 972 / ATCC 24843) (Fission yeast).